The sequence spans 420 residues: MRCAPPGLLLAQLHACIFWSGLWPAGCQSPPAAWRQRIQWENNGQVYSLLSQGAQYQPPRRRQGAEPASSPVLLLRGNGSVPRAAAAAAARPQPEPQPQAQPQPRPRSSRRQPLGRRHWFQAGYRAPSGSARPAPRRRPRGRRSRRRERAERRRAAAPSGLRPGREDVMVGDDPYSPYKYTDDNPYYNYYDTYERPRQGSRYRPGYGTGYFQYGLPDLVPDPYYIQASTYVQRMSMYNLRCAAEENCLASSAYRADVRDYDNRVLLRFPQRVKNQGTSDFLPSRPRYSWEWHSCHQHYHSMDEFSHYDLLDASSHRKVAEGHKASFCLEDTSCDYGYYRRYACTAHTQGLSPGCYDTYNADIDCQWIDITDVKPGNYILKVSVNPSYLVPESDYSNNIVRCDIRYTGHHAYASGCTISPY.

Positions 1–27 (MRCAPPGLLLAQLHACIFWSGLWPAGC) are cleaved as a signal peptide. Positions 28-171 (QSPPAAWRQR…RPGREDVMVG (144 aa)) are cleaved as a propeptide — removed by BMP1. The disordered stretch occupies residues 54–177 (AQYQPPRRRQ…VMVGDDPYSP (124 aa)). The N-linked (GlcNAc...) asparagine glycan is linked to N78. The segment covering 82-92 (PRAAAAAAARP) has biased composition (low complexity). A compositionally biased stretch (pro residues) spans 93–105 (QPEPQPQAQPQPR). 2 stretches are compositionally biased toward basic residues: residues 107–119 (RSSR…RRHW) and 134–147 (APRR…SRRR). Position 190 is a sulfotyrosine (Y190). Residues 216–420 (PDLVPDPYYI…YASGCTISPY (205 aa)) form a lysyl-oxidase like region. Cystine bridges form between C241-C247, C294-C343, C327-C333, C354-C364, and C401-C415. Residues H295, H297, and H299 each contribute to the Cu cation site. The lysine tyrosylquinone (Lys-Tyr) cross-link spans 323-358 (KASFCLEDTSCDYGYYRRYACTAHTQGLSPGCYDTY). A 2',4',5'-topaquinone modification is found at Y358.

It belongs to the lysyl oxidase family. Cu cation serves as cofactor. Lysine tyrosylquinone residue is required as a cofactor. Post-translationally, the lysine tyrosylquinone cross-link (LTQ) is generated by condensation of the epsilon-amino group of a lysine with a topaquinone produced by oxidation of tyrosine. Proteolytically cleaved by BMP1 which removes the propeptide. Also proteolytically cleaved by ADAMTS2 and ADAMTS14, but not by ADAMTS3, at an additional cleavage site downstream of the BMP1 cleavage site. The propeptide plays a role in directing the deposition of this enzyme to elastic fibers, via interaction with tropoelastin. Cleavage by BMP1 to remove the propeptide does not increase enzymatic activity but increases binding to collagen. Cleavage by ADAMTS2 produces a form with reduced collagen-binding activity. In terms of processing, sulfated at Tyr-190 and also at either Tyr-186 or Tyr-187 which enhances binding to collagen.

Its subcellular location is the secreted. It localises to the extracellular space. The enzyme catalyses L-lysyl-[protein] + O2 + H2O = (S)-2-amino-6-oxohexanoyl-[protein] + H2O2 + NH4(+). Responsible for the post-translational oxidative deamination of peptidyl lysine residues in precursors to fibrous collagen and elastin. In terms of biological role, in addition to cross linking of extracellular matrix proteins, it may have a direct role in tumor suppression. The protein is Protein-lysine 6-oxidase (LOX) of Gallus gallus (Chicken).